Here is a 96-residue protein sequence, read N- to C-terminus: NADH-quinone oxidoreductase subunit K (96 aa).

3 consecutive transmembrane segments (helical) span residues 1-21, 25-45, and 56-76; these read MNYI…VLVR, IIVF…FVAF, and VIAF…LAII.

It belongs to the complex I subunit 4L family. As to quaternary structure, NDH-1 is composed of 14 different subunits. Subunits NuoA, H, J, K, L, M, N constitute the membrane sector of the complex.

The protein resides in the cell membrane. The catalysed reaction is a quinone + NADH + 5 H(+)(in) = a quinol + NAD(+) + 4 H(+)(out). Its function is as follows. NDH-1 shuttles electrons from NADH, via FMN and iron-sulfur (Fe-S) centers, to quinones in the respiratory chain. The immediate electron acceptor for the enzyme in this species is believed to be a menaquinone. Couples the redox reaction to proton translocation (for every two electrons transferred, four hydrogen ions are translocated across the cytoplasmic membrane), and thus conserves the redox energy in a proton gradient. The sequence is that of NADH-quinone oxidoreductase subunit K from Thermobifida fusca (strain YX).